A 391-amino-acid chain; its full sequence is Casein kinase II subunit alpha (391 aa).

Residues 36-41 (QDDYQL) form an interaction with beta subunit region. Positions 39 to 324 (YQLVRKLGRG…AREAMEHPYF (286 aa)) constitute a Protein kinase domain. Residues 45–53 (LGRGKYSEV) and Lys68 contribute to the ATP site. The Proton acceptor role is filled by Asp156. A phosphothreonine; by CDK1 mark is found at Thr344 and Thr360. Ser362 and Ser370 each carry phosphoserine; by CDK1.

The protein belongs to the protein kinase superfamily. Ser/Thr protein kinase family. CK2 subfamily. In terms of assembly, heterotetramer composed of two catalytic subunits (alpha chain and/or alpha' chain) and two regulatory subunits (beta chains). The tetramer can exist as a combination of 2 alpha/2 beta, 2 alpha'/2 beta or 1 alpha/1 alpha'/2 beta subunits. Also part of a CK2-SPT16-SSRP1 complex composed of SSRP1, SUPT16H, CSNK2A1, CSNK2A2 and CSNK2B, which forms following UV irradiation. Interacts with RNPS1. Interacts with SNAI1. Interacts with PML. Interacts with CCAR2. Interacts with HIRIP3. In terms of processing, phosphorylated at Thr-344, Thr-360, Ser-362 and Ser-370 by CDK1 in prophase and metaphase and dephosphorylated during anaphase. Phosphorylation does not directly affect casein kinase 2 activity, but may contribute to its regulation by forming binding sites for interacting proteins and/or targeting it to different compartments.

Its subcellular location is the nucleus. It carries out the reaction L-seryl-[protein] + ATP = O-phospho-L-seryl-[protein] + ADP + H(+). It catalyses the reaction L-threonyl-[protein] + ATP = O-phospho-L-threonyl-[protein] + ADP + H(+). Its activity is regulated as follows. Constitutively active protein kinase whose activity is not directly affected by phosphorylation. Seems to be regulated by level of expression and localization. Catalytic subunit of a constitutively active serine/threonine-protein kinase complex that phosphorylates a large number of substrates containing acidic residues C-terminal to the phosphorylated serine or threonine. Regulates numerous cellular processes, such as cell cycle progression, apoptosis and transcription, as well as viral infection. May act as a regulatory node which integrates and coordinates numerous signals leading to an appropriate cellular response. During mitosis, functions as a component of the p53/TP53-dependent spindle assembly checkpoint (SAC) that maintains cyclin-B-CDK1 activity and G2 arrest in response to spindle damage. Also required for p53/TP53-mediated apoptosis, phosphorylating 'Ser-392' of p53/TP53 following UV irradiation. Phosphorylates a number of DNA repair proteins in response to DNA damage, such as MDC1, MRE11, RAD9A, RAD51 and HTATSF1, promoting their recruitment to DNA damage sites. Can also negatively regulate apoptosis. Phosphorylates the caspases CASP9 and CASP2 and the apoptotic regulator NOL3. Phosphorylation protects CASP9 from cleavage and activation by CASP8, and inhibits the dimerization of CASP2 and activation of CASP8. Phosphorylates YY1, protecting YY1 from cleavage by CASP7 during apoptosis. Regulates transcription by direct phosphorylation of RNA polymerases I, II, III and IV. Also phosphorylates and regulates numerous transcription factors including NF-kappa-B, STAT1, CREB1, IRF1, IRF2, ATF1, ATF4, SRF, MAX, JUN, FOS, MYC and MYB. Phosphorylates Hsp90 and its co-chaperones FKBP4 and CDC37, which is essential for chaperone function. Mediates sequential phosphorylation of FNIP1, promoting its gradual interaction with Hsp90, leading to activate both kinase and non-kinase client proteins of Hsp90. Regulates Wnt signaling by phosphorylating CTNNB1 and the transcription factor LEF1. Acts as an ectokinase that phosphorylates several extracellular proteins. Phosphorylates PML at 'Ser-565' and primes it for ubiquitin-mediated degradation. Plays an important role in the circadian clock function by phosphorylating BMAL1 at 'Ser-90' which is pivotal for its interaction with CLOCK and which controls CLOCK nuclear entry. Phosphorylates FMR1, promoting FMR1-dependent formation of a membraneless compartment. May phosphorylate histone H2A on 'Ser-1'. This Oryctolagus cuniculus (Rabbit) protein is Casein kinase II subunit alpha (CSNK2A1).